The sequence spans 298 residues: DDRGK domain-containing protein 1 (298 aa).

The helical transmembrane segment at 1-21 (MDIVLYFVAVPILIVLIVSAV) threads the bilayer. Topologically, residues 22–298 (KVRGKTEEDN…NLIPEIHNTA (277 aa)) are cytoplasmic. The interval 71–149 (NSAYREAADN…EERRKEDKKE (79 aa)) is disordered. Over residues 82–94 (SPVEVEEEYEEAE) the composition is skewed to acidic residues. Basic and acidic residues predominate over residues 110 to 149 (KLEEKQAKRAQREAELEEREERKRTQELREEERRKEDKKE). A UFM1-interacting motif (UFIM) motif is present at residues 181–195 (SFVVEEQGEADELTE). The PCI domain maps to 215 to 259 (VLLEDLASHFGLRTQDAISRLQDLLSDGSITGVIDDRGKFIFITP).

It belongs to the DDRGK1 family. In terms of assembly, component of the UFM1 ribosome E3 ligase (UREL) complex, composed of ufl1, ddrgk1 and cdk5rap3.

The protein resides in the endoplasmic reticulum membrane. Its function is as follows. Component of the UFM1 ribosome E3 ligase (UREL) complex, a multiprotein complex that catalyzes ufmylation of endoplasmic reticulum-docked proteins. The UREL complex plays a key role in ribosome recycling by mediating mono-ufmylation of the RPL26/uL24 subunit of the 60S ribosome following ribosome dissociation: ufmylation weakens the junction between post-termination 60S subunits and SEC61 translocons, promoting release and recycling of the large ribosomal subunit from the endoplasmic reticulum membrane. Ufmylation of RPL26/uL24 and subsequent 60S ribosome recycling either take place after normal termination of translation or after ribosome stalling during cotranslational translocation at the endoplasmic reticulum. Within the UREL complex, DDRGK1 tethers the complex to the endoplasmic reticulum membrane to restrict its activity to endoplasmic reticulum-docked ribosomes and acts as an ufmylation 'reader': following RPL26/uL24 ufmylation, DDRGK1 specifically binds to ufmylated RPL26/uL24 via its UFIM motif, resulting in stable association between the 60S ribosome and the UREL complex, followed by dissociation of the 60S ribosome subunit from the endoplasmic reticulum membrane. The UREL complex is also involved in reticulophagy in response to endoplasmic reticulum stress by promoting ufmylation of proteins such as CYB5R3 and RPN1, thereby promoting lysosomal degradation of ufmylated proteins. Required for stabilization and ufmylation of ATG9A. This chain is DDRGK domain-containing protein 1, found in Osmerus mordax (Rainbow smelt).